Reading from the N-terminus, the 463-residue chain is Zinc finger protein PLAGL1 (463 aa).

C2H2-type zinc fingers lie at residues 4–26 (YPCQ…NYSH), 32–56 (YKCL…MATH), 62–84 (HQCA…LQTH), 91–113 (FGCE…LALH), 120–142 (LTCG…LKAH), 156–178 (HQCD…LVVH), and 184–207 (FLCQ…KKTH). A disordered region spans residues 285 to 310 (LHPVAPPTSPPQPLQNHKYNTSSTSY). Positions 287 to 297 (PVAPPTSPPQP) are enriched in pro residues. Over residues 298-310 (LQNHKYNTSSTSY) the composition is skewed to polar residues.

The protein belongs to the krueppel C2H2-type zinc-finger protein family. Interacts with THRSP.

It is found in the nucleus. Its function is as follows. Acts as a transcriptional activator. Involved in the transcriptional regulation of type 1 receptor for pituitary adenylate cyclase-activating polypeptide. The sequence is that of Zinc finger protein PLAGL1 (PLAGL1) from Sus scrofa (Pig).